The primary structure comprises 409 residues: LL-diaminopimelate aminotransferase (409 aa).

Substrate-binding residues include Tyr-15 and Gly-42. Residues Tyr-72, 108–109, Tyr-132, Asn-187, Tyr-218, and 246–248 each bind pyridoxal 5'-phosphate; these read SK and SFS. The substrate site is built by Lys-109, Tyr-132, and Asn-187. Position 249 is an N6-(pyridoxal phosphate)lysine (Lys-249). 2 residues coordinate pyridoxal 5'-phosphate: Arg-257 and Asn-292. Residues Asn-292 and Arg-388 each coordinate substrate.

It belongs to the class-I pyridoxal-phosphate-dependent aminotransferase family. LL-diaminopimelate aminotransferase subfamily. As to quaternary structure, homodimer. Pyridoxal 5'-phosphate serves as cofactor.

It catalyses the reaction (2S,6S)-2,6-diaminopimelate + 2-oxoglutarate = (S)-2,3,4,5-tetrahydrodipicolinate + L-glutamate + H2O + H(+). It functions in the pathway amino-acid biosynthesis; L-lysine biosynthesis via DAP pathway; LL-2,6-diaminopimelate from (S)-tetrahydrodipicolinate (aminotransferase route): step 1/1. Involved in the synthesis of meso-diaminopimelate (m-DAP or DL-DAP), required for both lysine and peptidoglycan biosynthesis. Catalyzes the direct conversion of tetrahydrodipicolinate to LL-diaminopimelate. This is LL-diaminopimelate aminotransferase from Acaryochloris marina (strain MBIC 11017).